The primary structure comprises 305 residues: Glycine--tRNA ligase alpha subunit (305 aa).

This sequence belongs to the class-II aminoacyl-tRNA synthetase family. As to quaternary structure, tetramer of two alpha and two beta subunits.

Its subcellular location is the cytoplasm. The catalysed reaction is tRNA(Gly) + glycine + ATP = glycyl-tRNA(Gly) + AMP + diphosphate. The polypeptide is Glycine--tRNA ligase alpha subunit (Streptococcus pyogenes serotype M49 (strain NZ131)).